The primary structure comprises 318 residues: MKPLNIIFAGTPDFAARHLQALINSHHNVIAVYTQPDRPAGRGKKLTASPVKELAVSHNIPVYQPGSLRKEPAQQELAALNADIMVVVAYGLILPKVVLDTPRLGCINVHGSILPRWRGAAPIQRALWAGDKETGVTIMQMDVGLDTGDMLLKTYLPIEDDDTSATLYEKLALQGPDALLQALEGLANGTLTAEKQDEALANYAEKLSKEEARLDWSKSATQLWQEVRAFNPWPVSYFEHQGNTIKVWQTQVSTTSSNAAPGTIISASKKGIEVATGDGVLTLLSMQLPGKKPLSVADILNARGDWFTPNTRLNHEAQ.

(6S)-5,6,7,8-tetrahydrofolate is bound at residue 112 to 115; that stretch reads SILP.

The protein belongs to the Fmt family.

The enzyme catalyses L-methionyl-tRNA(fMet) + (6R)-10-formyltetrahydrofolate = N-formyl-L-methionyl-tRNA(fMet) + (6S)-5,6,7,8-tetrahydrofolate + H(+). In terms of biological role, attaches a formyl group to the free amino group of methionyl-tRNA(fMet). The formyl group appears to play a dual role in the initiator identity of N-formylmethionyl-tRNA by promoting its recognition by IF2 and preventing the misappropriation of this tRNA by the elongation apparatus. This chain is Methionyl-tRNA formyltransferase, found in Shewanella sp. (strain MR-4).